Reading from the N-terminus, the 260-residue chain is Voltage-dependent calcium channel gamma-6 subunit (260 aa).

Positions 14–33 (RRGAAGRRRAHGQGRSGLTP) are disordered. Over residues 15–25 (RGAAGRRRAHG) the composition is skewed to basic residues. A run of 4 helical transmembrane segments spans residues 43–63 (LLLA…EFWV), 143–163 (VIAV…IMVL), 169–189 (FLLR…LVSL), and 221–241 (LGCG…FLLL).

It belongs to the PMP-22/EMP/MP20 family. CACNG subfamily. In terms of assembly, interacts with CACNA1C. Identified in a complex with the L-type calcium channel subunits CACNA1C, CACNA2D1 and either CACNB1 or CACNB2. In terms of tissue distribution, detected in heart left ventricle.

The protein localises to the cell membrane. Its function is as follows. Regulates the activity of L-type calcium channels that contain CACNA1C as pore-forming subunit. The chain is Voltage-dependent calcium channel gamma-6 subunit (CACNG6) from Homo sapiens (Human).